The chain runs to 155 residues: Myosin light chain alkali (155 aa).

EF-hand domains are found at residues 7–41 and 80–115; these read REIENVEFVFEVMGSAGEGIDAVDLGDALRALNLN and GCYEDFIECLKLYDKEENGTMMLAELQHALLALGES.

Myosin is a hexamer of 2 heavy chains and 4 light chains.

In Drosophila pseudoobscura pseudoobscura (Fruit fly), this protein is Myosin light chain alkali (Mlc1).